The primary structure comprises 143 residues: MAKKIVGFIKLQIPAGKANPSPPVGPALGQRGLNIMEFCKAFNAQTQGMEPGLPVPVVITAFADKSFTFVMKTPPATVLIKKAAKVDKGSSKPHTDKVGSITRAQAEEIAKTKMPDLTAADLDAAVRTIAGSARSMGITVEGV.

It belongs to the universal ribosomal protein uL11 family. In terms of assembly, part of the ribosomal stalk of the 50S ribosomal subunit. Interacts with L10 and the large rRNA to form the base of the stalk. L10 forms an elongated spine to which L12 dimers bind in a sequential fashion forming a multimeric L10(L12)X complex. One or more lysine residues are methylated.

Forms part of the ribosomal stalk which helps the ribosome interact with GTP-bound translation factors. The polypeptide is Large ribosomal subunit protein uL11 (Burkholderia ambifaria (strain MC40-6)).